The sequence spans 282 residues: D-arabinitol 2-dehydrogenase [ribulose-forming] (282 aa).

2 residues coordinate NADP(+): leucine 32 and asparagine 53. Serine 170 (proton donor) is an active-site residue. Positions 185, 189, 218, and 220 each coordinate NADP(+). The active-site Proton acceptor is tyrosine 185. Residue lysine 189 is the Lowers pKa of active site Tyr of the active site.

The protein belongs to the short-chain dehydrogenases/reductases (SDR) family.

The catalysed reaction is D-arabinitol + NAD(+) = D-ribulose + NADH + H(+). It functions in the pathway carbohydrate metabolism; D-arabinitol metabolism. Catalyzes the NAD(+)-dependent oxidation of D-arabinitol at carbon 4 to produce D-ribulose. The sequence is that of D-arabinitol 2-dehydrogenase [ribulose-forming] (ARD) from Candida tropicalis (Yeast).